The following is a 25-amino-acid chain: Small ribosomal subunit protein eS32 (25 aa).

The segment at 1-25 (MRAKWRKKRVRRLKRKRRKTRARSK) is disordered.

It belongs to the eukaryotic ribosomal protein eS32 family. In terms of assembly, component of the small ribosomal subunit.

This chain is Small ribosomal subunit protein eS32 (RPL41), found in Quercus suber (Cork oak).